A 37-amino-acid polypeptide reads, in one-letter code: Large ribosomal subunit protein bL36 (37 aa).

The protein belongs to the bacterial ribosomal protein bL36 family.

The chain is Large ribosomal subunit protein bL36 from Prochlorococcus marinus (strain MIT 9303).